A 180-amino-acid polypeptide reads, in one-letter code: Centromere protein M (180 aa).

It localises to the nucleus. Its subcellular location is the chromosome. It is found in the centromere. Probable component of a centromeric complex involved in assembly of kinetochore proteins, mitotic progression and chromosome segregation. This chain is Centromere protein M (cenpm), found in Xenopus laevis (African clawed frog).